A 193-amino-acid polypeptide reads, in one-letter code: Putative kinase protein 029R (193 aa).

Residue 9–17 (GIIGSGKSS) coordinates ATP. Substrate is bound by residues E31, Y43, and Q54. The Proton acceptor role is filled by E78. Residues R79 and E142 each coordinate substrate.

This sequence belongs to the DCK/DGK family.

In Aedes vexans (Inland floodwater mosquito), this protein is Putative kinase protein 029R.